The chain runs to 346 residues: Uroporphyrinogen decarboxylase (346 aa).

Residues 23-27, Asp72, Tyr155, Ser209, and His322 each bind substrate; that span reads RQAGR.

It belongs to the uroporphyrinogen decarboxylase family. In terms of assembly, homodimer.

It is found in the cytoplasm. The enzyme catalyses uroporphyrinogen III + 4 H(+) = coproporphyrinogen III + 4 CO2. Its pathway is porphyrin-containing compound metabolism; protoporphyrin-IX biosynthesis; coproporphyrinogen-III from 5-aminolevulinate: step 4/4. Catalyzes the decarboxylation of four acetate groups of uroporphyrinogen-III to yield coproporphyrinogen-III. In Anaeromyxobacter dehalogenans (strain 2CP-C), this protein is Uroporphyrinogen decarboxylase.